We begin with the raw amino-acid sequence, 113 residues long: Protein suex-1 (113 aa).

An N-terminal signal peptide occupies residues 1–22; the sequence is MQSLLVFCLATIILSNFTEASA.

This is Protein suex-1 from Caenorhabditis elegans.